We begin with the raw amino-acid sequence, 122 residues long: uncharacterized protein (122 aa).

3 consecutive transmembrane segments (helical) span residues 33–53 (ALGL…LTIP), 58–78 (VLGV…LLRW), and 97–117 (PGYL…LVVA).

It to E.coli YidH.

It localises to the cell membrane. This is an uncharacterized protein from Mycobacterium tuberculosis (strain CDC 1551 / Oshkosh).